The chain runs to 121 residues: Chorion class CA protein ERA.4 (121 aa).

The first 23 residues, 1-23, serve as a signal peptide directing secretion; the sequence is MSSSFFCFFLFCFQTCLIQNVYS. The tract at residues 24-57 is left arm; it reads QCLGRVGPGGPPLGPYGGPLGGPGYGPVGYGGCG. Residues 58-105 are central domain; it reads GYGGSGIGNVAVAGELPVAGSAAVLGQVPVIGAVEFAGPACAVGSVSI. The interval 106–121 is right arm; the sequence is SGACGPTCGCGGSPYY.

It belongs to the chorion protein family.

This protein is one of many from the eggshell of the silk moth. This is Chorion class CA protein ERA.4 (ERA.4) from Bombyx mori (Silk moth).